The primary structure comprises 724 residues: Probable serine/threonine-protein kinase KKQ8 (724 aa).

Disordered regions lie at residues 1–81 (MVMQ…RQRS) and 93–188 (HPFR…KDIL). S19 is modified (phosphoserine). The span at 45 to 54 (PYRSSSTSPK) shows a compositional bias: low complexity. The span at 95–106 (FRQTGSGASNSP) shows a compositional bias: polar residues. The span at 143 to 162 (RSSSVSSCDSSNGTTSSSDS) shows a compositional bias: low complexity. 3 positions are modified to phosphoserine: S232, S238, and S241. The segment at 329–355 (SQTNHEKRTGQSPNDSNRSSPTQGRED) is disordered. Over residues 338 to 351 (GQSPNDSNRSSPTQ) the composition is skewed to polar residues. Positions 412–712 (GHPVGLVGAG…VGKLLDMQWM (301 aa)) constitute a Protein kinase domain. ATP is bound by residues 418 to 426 (VGAGAYGEV) and K455. D563 serves as the catalytic Proton acceptor.

The protein belongs to the protein kinase superfamily. CAMK Ser/Thr protein kinase family. NPR/HAL subfamily. HAL5 sub-subfamily.

It localises to the cytoplasm. The catalysed reaction is L-seryl-[protein] + ATP = O-phospho-L-seryl-[protein] + ADP + H(+). It catalyses the reaction L-threonyl-[protein] + ATP = O-phospho-L-threonyl-[protein] + ADP + H(+). This is Probable serine/threonine-protein kinase KKQ8 (KKQ8) from Saccharomyces cerevisiae (strain ATCC 204508 / S288c) (Baker's yeast).